The chain runs to 228 residues: Phosphoglycolate phosphatase 1 (228 aa).

Residue Asp-8 is the Nucleophile of the active site. Residues Asp-8 and Asp-10 each coordinate Mg(2+). Lys-149 contacts substrate. Mg(2+) contacts are provided by Asp-172 and Asp-176.

This sequence belongs to the archaeal SPP-like hydrolase family. Mg(2+) is required as a cofactor.

It catalyses the reaction 2-phosphoglycolate + H2O = glycolate + phosphate. In terms of biological role, catalyzes the dephosphorylation of 2-phosphoglycolate. The chain is Phosphoglycolate phosphatase 1 from Saccharolobus solfataricus (strain ATCC 35092 / DSM 1617 / JCM 11322 / P2) (Sulfolobus solfataricus).